The chain runs to 145 residues: uncharacterized protein (145 aa).

A run of 4 helical transmembrane segments spans residues 1-21 (MELF…YFLI), 28-48 (TVLI…MGAL), 54-74 (SMTS…AYVM), and 96-116 (FFLI…IPSA).

Belongs to the DcuC/DcuD transporter (TC 2.A.61) family.

Its subcellular location is the cell membrane. This is an uncharacterized protein from Haemophilus influenzae (strain ATCC 51907 / DSM 11121 / KW20 / Rd).